Reading from the N-terminus, the 803-residue chain is Protein AMEIOTIC 1 homolog (803 aa).

Disordered stretches follow at residues 21–64 (RPQV…QSLS) and 264–333 (RLRQ…RWSA). Residues 39 to 50 (NGKDDANHDESK) show a composition bias toward basic and acidic residues. A compositionally biased stretch (polar residues) spans 51–64 (NQSPGLPLSRQSLS). Residues 283-295 (KREEAESSMDKSR) show a composition bias toward basic and acidic residues. Residues 296 to 313 (AARKKKAKTYKSPKKVEK) show a composition bias toward basic residues. Over residues 314 to 333 (RRVVEAKDGDPRRGKDRWSA) the composition is skewed to basic and acidic residues. A coiled-coil region spans residues 450–567 (VKKKVEELAE…SSFLSLKEQL (118 aa)). The disordered stretch occupies residues 651-688 (ISGGGSSSCPVASGPEQLPRSSSCPSIGPGGLPPSSRA).

The protein localises to the nucleus. It localises to the chromosome. Its function is as follows. Plays a fundamental role in building the proper chromosome structure at the beginning of meiosis in male meiocytes. Required for the transition from leptotene to zygotene in meiocytes. Required for homologous chromosome pairing. In Oryza sativa subsp. japonica (Rice), this protein is Protein AMEIOTIC 1 homolog.